Reading from the N-terminus, the 444-residue chain is MAERKYFGTDGVRGKVGQFPITPDFALKLGWAAGKILATQGTKQVLIGKDTRISGYMLESALEAGLAAAGLSAAFVGPMPTPAIAYLTRTFRAEAGIVISASHNPYYDNGIKFFSSVGEKLPDEVEEAIEALLDQPMDCVESAQLGKAMRINDAAGRYIEFCKGTFPANASLKGYKIVVDCANGATYHIAPNVMRELGAEVIEIGTKPDGLNINEKCGATDIKALQKVVVESGADVGLAYDGDGDRIMMVDHLGNKVDGDQILFIIAREALRSGKLHGGVVGTLMSNMGLEVALKHLAIPFTRANVGDRYVLEQLKEKGWKLGGENSGHIIVLDKNTTGDGIIASLEVLAAMEAHKMSLNDLARAVPLFPQVLINVRFEGGKNPLESDAVKAVAADVEKRLAGKGRILLRKSGTEPLIRVMVECEDGALAQSCAEEIVEAVKSN.

S102 serves as the catalytic Phosphoserine intermediate. Mg(2+)-binding residues include S102, D241, D243, and D245. S102 carries the post-translational modification Phosphoserine.

It belongs to the phosphohexose mutase family. The cofactor is Mg(2+). In terms of processing, activated by phosphorylation.

The catalysed reaction is alpha-D-glucosamine 1-phosphate = D-glucosamine 6-phosphate. Functionally, catalyzes the conversion of glucosamine-6-phosphate to glucosamine-1-phosphate. This Actinobacillus pleuropneumoniae serotype 5b (strain L20) protein is Phosphoglucosamine mutase.